The sequence spans 300 residues: NAD kinase (300 aa).

Residue Asp-75 is the Proton acceptor of the active site. NAD(+) is bound by residues 75-76 (DG), 149-150 (ND), Arg-177, Asp-179, 190-195 (TAYALS), Ala-214, and Gln-248.

The protein belongs to the NAD kinase family. Requires a divalent metal cation as cofactor.

It is found in the cytoplasm. It carries out the reaction NAD(+) + ATP = ADP + NADP(+) + H(+). Its function is as follows. Involved in the regulation of the intracellular balance of NAD and NADP, and is a key enzyme in the biosynthesis of NADP. Catalyzes specifically the phosphorylation on 2'-hydroxyl of the adenosine moiety of NAD to yield NADP. The protein is NAD kinase of Burkholderia mallei (strain SAVP1).